A 178-amino-acid polypeptide reads, in one-letter code: Protein Vhl (178 aa).

Belongs to the VHL family. In terms of assembly, part of a complex with Cul2, Roc1a/Rbx1 and the elongin BC complex. Interacts with sima/Hif1a. Interacts with itself. Interacts with mgr and betaTub56D/tubulin beta-1 chain. Interacts with tubulin alpha-beta heterodimers by itself or in complex with mgr. Interacts with microtubules (MTs).

It participates in protein modification; protein ubiquitination. Its function is as follows. Involved in development of tracheal vasculature. Probably involved in halting cell migration at the end of vascular tube outgrowth. Possesses E3 ubiquitin ligase activity when in complex with Elongin BC complex, Cul2 and Rox1a/Rbx1, and can target sima/Hif1a for ubiquitination. May play a critical role in promoting microtubule stabilization when tubulins are correctly folded by the prefoldin complex. If tubulin is incorrectly folded, may promote its degradation. This is Protein Vhl from Drosophila melanogaster (Fruit fly).